The following is a 117-amino-acid chain: Pancreatic progenitor cell differentiation and proliferation factor A (117 aa).

A disordered region spans residues Gly22 to Leu46. The span at Ser23 to Ser33 shows a compositional bias: low complexity.

The protein belongs to the PPDPF family. As to expression, expressed exclusively in the exocrine cells during pancreas development.

Functionally, probable regulator of exocrine pancreas development. This Danio rerio (Zebrafish) protein is Pancreatic progenitor cell differentiation and proliferation factor A (ppdpfa).